The following is a 107-amino-acid chain: Basic phospholipase A2 sphenotoxin subunit B (107 aa).

The Ca(2+) site is built by Tyr27, Gly29, and Gly31. Intrachain disulfides connect Cys28-Cys44, Cys43-Cys91, Cys50-Cys88, Cys57-Cys81, and Cys75-Cys86. His47 is a catalytic residue. Asp48 is a binding site for Ca(2+). Residue Asp89 is part of the active site.

Belongs to the phospholipase A2 family. Group II subfamily. D49 sub-subfamily. In terms of assembly, heterodimer of A and B chains; non-covalently linked. The acidic protein (B chain) has phospholipase A2 activity and the A chain weakly inhibits the B chain enzymatic activity but potentiates its lethal potency. In terms of tissue distribution, expressed by the venom gland.

Its subcellular location is the secreted. It carries out the reaction a 1,2-diacyl-sn-glycero-3-phosphocholine + H2O = a 1-acyl-sn-glycero-3-phosphocholine + a fatty acid + H(+). Its function is as follows. Heterodimer A-B: Sphenotoxin is a potent neurotoxin that possesses phospholipase A2 (PLA2) activity. It consists of a non-covalent association of a basic PLA2 subunit B with a non-enzymatic subunit A. Monomer B: Not found in vivo. In vitro, potent neurotoxin that possesses phospholipase A2 (PLA2) activity and exerts a lethal action by blocking neuromuscular transmission. Induces paralysis of the hind legs and neuromuscular blockade in mouse phrenic nerve-diaphragm preparations. PLA2 catalyzes the calcium-dependent hydrolysis of the 2-acyl groups in 3-sn-phosphoglycerides. The chain is Basic phospholipase A2 sphenotoxin subunit B from Ophryacus sphenophrys (Broad-horned pitviper).